The following is a 224-amino-acid chain: Mammalian ependymin-related protein 1 (224 aa).

The first 37 residues, 1–37, serve as a signal peptide directing secretion; sequence MLTRAPRRLVQGPRETWLLGGLWVWILCGLGMAGSPG. Intrachain disulfides connect Cys42/Cys172, Cys88/Cys222, and Cys113/Cys210. 2 N-linked (GlcNAc...) asparagine glycosylation sites follow: Asn130 and Asn182.

This sequence belongs to the ependymin family. As to quaternary structure, homodimer. N-glycosylated; the glycan contains mannose-6-phosphate moieties. In terms of tissue distribution, detected in brain (at protein level).

Its subcellular location is the lysosome lumen. It is found in the secreted. In terms of biological role, binds anionic lipids and gangliosides at acidic pH. This Rattus norvegicus (Rat) protein is Mammalian ependymin-related protein 1 (Epdr1).